Here is a 286-residue protein sequence, read N- to C-terminus: Elongation factor Ts (286 aa).

The involved in Mg(2+) ion dislocation from EF-Tu stretch occupies residues Thr-79–Val-82.

This sequence belongs to the EF-Ts family.

It localises to the cytoplasm. Associates with the EF-Tu.GDP complex and induces the exchange of GDP to GTP. It remains bound to the aminoacyl-tRNA.EF-Tu.GTP complex up to the GTP hydrolysis stage on the ribosome. This chain is Elongation factor Ts, found in Wolbachia pipientis wMel.